We begin with the raw amino-acid sequence, 450 residues long: MGNGDSVVAQKRLARFRPDERPAVEGTFDRLHGARSSASAGKTSKGLSLDMLQLTMGKMASESMIKRVFQGLHSIDPGVPLHPGDGVSREQLLIFLADVLRGTAEERAPLVLAMAEGAKATVTTTEQIRGFMEDLVYAAVQTLAHKGHLRAWHPERMGDGAQGVKLLAEQLTSELKPSDQNSCDIACLEDWLFRIPMMAMFLELLIGEGLGVVLPSRPPPTLLPPCQFAPWTDLRCVLSLPLLMFLSPLLPEGHSAPWRMLFSTKMHGESFTRLLGSCKSRGPTVLLVKDTKGYIFGGFSSQSWEVKPQFQGDSRCFLFSVFPYMRVFTCTGYNDHYMYLNQGQQTMPNGLGMGGQHGYFGLWLDYDFGHGHSRARPRCTTYGSPQLSADEDFKLDTLEVWGVGKLPEEQEEDEKKKSILDADLEVQAMMEMTGKTLHSQGLREPEEDED.

The region spanning 236–404 is the TLDc domain; the sequence is CVLSLPLLMF…LDTLEVWGVG (169 aa). Residues 430–450 are disordered; the sequence is MEMTGKTLHSQGLREPEEDED.

Its subcellular location is the membrane. It is found in the cytoplasm. The protein resides in the lysosome. Functionally, activates an alternative mTOR signaling to regulate cell proliferation and migration. This is MTOR-associated protein MEAK7 (meak7) from Danio rerio (Zebrafish).